A 187-amino-acid polypeptide reads, in one-letter code: Large ribosomal subunit protein uL22 (187 aa).

The span at valine 159–lysine 171 shows a compositional bias: basic and acidic residues. The tract at residues valine 159–phenylalanine 187 is disordered. Positions lysine 172–phenylalanine 187 are enriched in basic residues.

This sequence belongs to the universal ribosomal protein uL22 family.

This Caenorhabditis elegans protein is Large ribosomal subunit protein uL22 (rpl-17).